Consider the following 1104-residue polypeptide: MASACQILRWALALGLGLTFKVTHAFRSQDELLSSLESYEIAFPTRVDHNGAMLAFSPPAFRRQRRGAGATTESRLFYKVAAPSTHFLLNLTRSPRLLAGHVSVEYWTREGLAWQRAARAHCLYAGHLQGQAGSSHVAVSTCGGLHGLIVADDEEYLIEPLQGGPKGHRGPEESGPHVVYKRSSLRHPHLDTACGVRDEKPWKGRPWWLRTLKPPPARPLGNESERGQLGLKRSVSRERYVETLVVADKMMVAYHGRRDVEQYVLAIMNIVAKLFQDSSLGNIVNILVTRLILLTEDQPTLEITHHAGKSLDSFCKWQKSIVSHSGHGNAIPENGVANHDTAVLITRYDICIYKNKPCGTLGLAPVGGMCERERSCSINEDIGLATAFTIAHEIGHTFGMNHDGVGNGCGARGQDPAKLMAAHITMKTNPFVWSSCSRDYITSFLDSGLGLCLNNRPPRQDFVYPTVAPGQAYDADEQCRFQHGVKSRQCKYGEVCSELWCLSKSNRCITNSIPAAEGTLCQTHTIDKGWCYKRVCVPFGSRPEGVDGAWGPWTPWGDCSRSCGGGVSSSSRHCDSPRPTIGGKYCLGERRRHRSCNTNDCPPGSQDFREMQCSEFDSVPFRGKFYTWKTYRGGGVKACSLTCLAEGFNFYTERAAAVVDGTPCRPDTVDICVSGECKHVGCDRVLGSDLREDKCRVCGGDGSACETIEGVFSPALPGTGYEDVVWIPKGSVHIFIQDLNLSLSHLALKGDQESLLLEGLPGTPQPHRLPLAGTTFHLRQGPDQAQSLEALGPINASLIIMVLAQAELPALHYRFNAPIARDALPPYSWHYAPWTKCSAQCAGGSQVQVVECRNQLDSSAVAPHYCSGHSKLPKRQRACNTEPCPPDWVVGNWSRCSRSCDAGVRSRSVVCQRRVSAAEEKALDDSACPQPRPPVLEACQGPMCPPEWATLDWSECTPSCGPGLRHRVVLCKSADQRSTLPPGHCLPAAKPPSTMRCNLRRCPPARWVTSEWGECSTQCGLGQQQRTVRCTSHTGQPSRECTEALRPSTMQQCEAKCDSVVPPGDGPEECKDVNKVAYCPLVLKFQFCSRAYFRQMCCKTCQGR.

Positions 1 to 25 (MASACQILRWALALGLGLTFKVTHA) are cleaved as a signal peptide. A propeptide spanning residues 26 to 233 (FRSQDELLSS…SERGQLGLKR (208 aa)) is cleaved from the precursor. N-linked (GlcNAc...) asparagine glycans are attached at residues Asn90 and Asn222. The 219-residue stretch at 239–457 (RYVETLVVAD…GLGLCLNNRP (219 aa)) folds into the Peptidase M12B domain. 11 cysteine pairs are disulfide-bonded: Cys315–Cys376, Cys351–Cys358, Cys370–Cys452, Cys409–Cys436, Cys479–Cys501, Cys490–Cys508, Cys496–Cys531, Cys521–Cys536, Cys559–Cys596, Cys563–Cys601, and Cys574–Cys586. His392 is a binding site for Zn(2+). Residue Glu393 is part of the active site. Zn(2+) contacts are provided by His396 and His402. Residues 460-546 (QDFVYPTVAP…VPFGSRPEGV (87 aa)) enclose the Disintegrin domain. The 56-residue stretch at 547–602 (DGAWGPWTPWGDCSRSCGGGVSSSSRHCDSPRPTIGGKYCLGERRRHRSCNTNDCP) folds into the TSP type-1 1 domain. Positions 706–818 (ETIEGVFSPA…PALHYRFNAP (113 aa)) are spacer. 2 N-linked (GlcNAc...) asparagine glycosylation sites follow: Asn740 and Asn795. TSP type-1 domains lie at 825–885 (PPYS…EPCP), 888–943 (WVVG…QGPM), 944–1003 (CPPE…RRCP), and 1004–1058 (PARW…AKCD). Intrachain disulfides connect Cys837-Cys879, Cys841-Cys884, and Cys852-Cys866. N-linked (GlcNAc...) asparagine glycosylation is present at Asn892. The PLAC domain maps to 1066–1104 (GPEECKDVNKVAYCPLVLKFQFCSRAYFRQMCCKTCQGR).

In terms of assembly, interacts with FBN1; this interaction promotes microfibrils assembly. The cofactor is Zn(2+). Post-translationally, glycosylated. Can be O-fucosylated by POFUT2 on a serine or a threonine residue found within the consensus sequence C1-X(2)-(S/T)-C2-G of the TSP type-1 repeat domains where C1 and C2 are the first and second cysteine residue of the repeat, respectively. Fucosylated repeats can then be further glycosylated by the addition of a beta-1,3-glucose residue by the glucosyltransferase, B3GALTL. Fucosylation mediates the efficient secretion of ADAMTS family members. Can also be C-glycosylated with one or two mannose molecules on tryptophan residues within the consensus sequence W-X-X-W of the TPRs, and N-glycosylated. These other glycosylations can also facilitate secretion. As to expression, widely expressed in adult tissues.

The protein localises to the secreted. Its subcellular location is the extracellular space. The protein resides in the extracellular matrix. Functionally, metalloprotease that participate in microfibrils assembly. Microfibrils are extracellular matrix components occurring independently or along with elastin in the formation of elastic tissues. The sequence is that of A disintegrin and metalloproteinase with thrombospondin motifs 10 (Adamts10) from Mus musculus (Mouse).